The primary structure comprises 273 residues: F-actin-capping protein subunit alpha (273 aa).

This sequence belongs to the F-actin-capping protein alpha subunit family. As to quaternary structure, component of the F-actin capping complex, composed of a heterodimer of an alpha and a beta subunit.

Its subcellular location is the cytoplasm. It localises to the cytoskeleton. The protein resides in the actin patch. Functionally, F-actin-capping proteins bind in a Ca(2+)-independent manner to the fast growing ends of actin filaments (barbed end) thereby blocking the exchange of subunits at these ends. Unlike other capping proteins (such as gelsolin and severin), these proteins do not sever actin filaments. The polypeptide is F-actin-capping protein subunit alpha (cap1) (Aspergillus oryzae (strain ATCC 42149 / RIB 40) (Yellow koji mold)).